A 78-amino-acid polypeptide reads, in one-letter code: Small ribosomal subunit protein bS16c (78 aa).

The protein belongs to the bacterial ribosomal protein bS16 family.

The protein localises to the plastid. The protein resides in the chloroplast. The sequence is that of Small ribosomal subunit protein bS16c from Chara vulgaris (Common stonewort).